Here is a 301-residue protein sequence, read N- to C-terminus: Protease HtpX homolog (301 aa).

Helical transmembrane passes span 11–31 and 34–54; these read VLLL…IAGA and NSAF…YSYW. A Zn(2+)-binding site is contributed by histidine 138. Residue glutamate 139 is part of the active site. Histidine 142 contributes to the Zn(2+) binding site. Helical transmembrane passes span 154-174 and 188-208; these read AAAV…AAIF and LVGL…QLAI. Glutamate 213 contributes to the Zn(2+) binding site.

It belongs to the peptidase M48B family. Requires Zn(2+) as cofactor.

It localises to the cell membrane. The protein is Protease HtpX homolog of Kocuria rhizophila (strain ATCC 9341 / DSM 348 / NBRC 103217 / DC2201).